We begin with the raw amino-acid sequence, 491 residues long: Protein OrfX3 (491 aa).

The protein belongs to the TULIP P47 family. In terms of assembly, heterodimer of OrfX1 and OrfX3; crystallizes as a dimer of heterodimers.

In terms of biological role, expression of the ptox operon (ntnh-orfX1-orfX2-orfX3-pmp1) in B.thuringiensis kills Anopheles but not Aedes mosquito 3rd instar larvae. The ntnh-pmp1 construct is about half as toxic. This chain is Protein OrfX3, found in Paraclostridium bifermentans (Clostridium bifermentans).